The sequence spans 176 residues: Ribosome rescue factor SmrB (176 aa).

The 76-residue stretch at 98 to 173 (LDLHGLNQYQ…NDAAIMVIIE (76 aa)) folds into the Smr domain.

The protein belongs to the SmrB family. As to quaternary structure, associates with collided ribosomes, but not with correctly translating polysomes.

In terms of biological role, acts as a ribosome collision sensor. Detects stalled/collided disomes (pairs of ribosomes where the leading ribosome is stalled and a second ribosome has collided with it) and endonucleolytically cleaves mRNA at the 5' boundary of the stalled ribosome. Stalled/collided disomes form a new interface (primarily via the 30S subunits) that binds SmrB. Cleaved mRNA becomes available for tmRNA ligation, leading to ribosomal subunit dissociation and rescue of stalled ribosomes. This is Ribosome rescue factor SmrB from Buchnera aphidicola subsp. Schizaphis graminum (strain Sg).